The sequence spans 430 residues: MTSVVVVGTQWGDEGKGKITDFLSADAEVIARYQGGDNAGHTIVIDGKKFKLHLIPSGIFFPQKISVIGNGVVVNPKSLVKELAYLHDEGVTTDNLRISDRAHVILPYHIQLDQLQEDAKGDNKIGTTIKGIGPAYMDKAARVGIRIADLLDKDIFAERLRINLAEKNRLFEKMYDSTPLDFDAIFEEYYAYGQEIKQYVTDTSVILNDALDAGKRVLFEGAQGVMLDIDQGTYPFVTSSNPVAGGVTIGSGVGPSKINKVVGVCKAYTSRVGDGPFPTELFDEVGERIREVGHEYGTTTGRPRRVGWFDSVVMRHSRRVSGITNLSLNSIDVLSGLDTVKICVAYDLDRKRIDYYPASLEQLKRCKPIYEELPGWQEDITGVRSLDELPENARNYVRRVGELVGVRISTFSVGPGREQTNILESVWASI.

Residues 12 to 18 (GDEGKGK) and 40 to 42 (GHT) contribute to the GTP site. Asp13 serves as the catalytic Proton acceptor. Mg(2+) is bound by residues Asp13 and Gly40. IMP is bound by residues 13–16 (DEGK), 38–41 (NAGH), Thr128, Arg142, Gln223, Thr238, and Arg302. Residue His41 is the Proton donor of the active site. Residue 298 to 304 (TTTGRPR) participates in substrate binding. GTP is bound by residues Arg304, 330 to 332 (SID), and 412 to 414 (SVG).

Belongs to the adenylosuccinate synthetase family. As to quaternary structure, homodimer. The cofactor is Mg(2+).

The protein localises to the cytoplasm. The catalysed reaction is IMP + L-aspartate + GTP = N(6)-(1,2-dicarboxyethyl)-AMP + GDP + phosphate + 2 H(+). It functions in the pathway purine metabolism; AMP biosynthesis via de novo pathway; AMP from IMP: step 1/2. Functionally, plays an important role in the de novo pathway of purine nucleotide biosynthesis. Catalyzes the first committed step in the biosynthesis of AMP from IMP. In Streptococcus pyogenes serotype M5 (strain Manfredo), this protein is Adenylosuccinate synthetase.